Consider the following 392-residue polypeptide: Putative glutamate--cysteine ligase 2 (392 aa).

The interval 1-21 (MMPVSGWRAVSSAPASSSAGR) is disordered. Positions 9–19 (AVSSAPASSSA) are enriched in low complexity.

Belongs to the glutamate--cysteine ligase type 2 family. YbdK subfamily.

The enzyme catalyses L-cysteine + L-glutamate + ATP = gamma-L-glutamyl-L-cysteine + ADP + phosphate + H(+). In terms of biological role, ATP-dependent carboxylate-amine ligase which exhibits weak glutamate--cysteine ligase activity. This chain is Putative glutamate--cysteine ligase 2, found in Mycobacterium ulcerans (strain Agy99).